A 347-amino-acid chain; its full sequence is MQTKNILDFEYSDLQSYLLNELGLEKFRTDQICDWIYKKRVFDFESMTNLSKDDRQKLSDNFKISIPHIVKKEVSKIDGTTKYLLELEDKNTVEAVIIYYPSRTIACISTQVGCPLKCSFCSTGQSGYVRNLSTGEIIGQLLAMEKDKEMDVKNVVYMGMGEPLLNFNNVVQTIEILNHPKMKKLGARHITISTAGIPQKIEEVGDLNKEFRLSVSLHAPTNLQRDQIMPINHKYPVEQVIQSCRIYQKKTKKRVTFEYILIKGFNDSKEDALKLVELFGDLKVMVNLIPVNENPAGFEKPSKRFIQAFLDTLVKNGIDAVVRAEKGSDISAACGQLRTRELKEANR.

The active-site Proton acceptor is Glu94. The region spanning 100–319 (YPSRTIACIS…LDTLVKNGID (220 aa)) is the Radical SAM core domain. A disulfide bond links Cys107 and Cys334. Residues Cys114, Cys118, and Cys121 each contribute to the [4Fe-4S] cluster site. S-adenosyl-L-methionine contacts are provided by residues 161 to 162 (GE), Ser193, 216 to 218 (SLH), and Asn292. Catalysis depends on Cys334, which acts as the S-methylcysteine intermediate.

This sequence belongs to the radical SAM superfamily. RlmN family. The cofactor is [4Fe-4S] cluster.

The protein resides in the cytoplasm. It carries out the reaction adenosine(2503) in 23S rRNA + 2 reduced [2Fe-2S]-[ferredoxin] + 2 S-adenosyl-L-methionine = 2-methyladenosine(2503) in 23S rRNA + 5'-deoxyadenosine + L-methionine + 2 oxidized [2Fe-2S]-[ferredoxin] + S-adenosyl-L-homocysteine. It catalyses the reaction adenosine(37) in tRNA + 2 reduced [2Fe-2S]-[ferredoxin] + 2 S-adenosyl-L-methionine = 2-methyladenosine(37) in tRNA + 5'-deoxyadenosine + L-methionine + 2 oxidized [2Fe-2S]-[ferredoxin] + S-adenosyl-L-homocysteine. Its function is as follows. Specifically methylates position 2 of adenine 2503 in 23S rRNA and position 2 of adenine 37 in tRNAs. The protein is Probable dual-specificity RNA methyltransferase RlmN of Petrotoga mobilis (strain DSM 10674 / SJ95).